The chain runs to 174 residues: Adipose-secreted signaling protein (174 aa).

At Ala2 the chain carries N-acetylalanine. Residue Thr147 is modified to Phosphothreonine.

It belongs to the ADISSP family.

The protein localises to the secreted. Adipocyte-secreted protein (adipokine) that acts as a key regulator for white adipose tissue (WAT) thermogenesis and glucose homeostasis at least in part through activation of protein kinase A (PKA). This is Adipose-secreted signaling protein from Homo sapiens (Human).